A 366-amino-acid chain; its full sequence is Beta sliding clamp (366 aa).

This sequence belongs to the beta sliding clamp family. In terms of assembly, forms a ring-shaped head-to-tail homodimer around DNA which binds and tethers DNA polymerases and other proteins to the DNA. The DNA replisome complex has a single clamp-loading complex (3 tau and 1 each of delta, delta', psi and chi subunits) which binds 3 Pol III cores (1 core on the leading strand and 2 on the lagging strand) each with a beta sliding clamp dimer. Additional proteins in the replisome are other copies of gamma, psi and chi, Ssb, DNA helicase and RNA primase.

It is found in the cytoplasm. Functionally, confers DNA tethering and processivity to DNA polymerases and other proteins. Acts as a clamp, forming a ring around DNA (a reaction catalyzed by the clamp-loading complex) which diffuses in an ATP-independent manner freely and bidirectionally along dsDNA. Initially characterized for its ability to contact the catalytic subunit of DNA polymerase III (Pol III), a complex, multichain enzyme responsible for most of the replicative synthesis in bacteria; Pol III exhibits 3'-5' exonuclease proofreading activity. The beta chain is required for initiation of replication as well as for processivity of DNA replication. The polypeptide is Beta sliding clamp (dnaN) (Chlamydia pneumoniae (Chlamydophila pneumoniae)).